Here is a 255-residue protein sequence, read N- to C-terminus: MILVTNDDGYNSYGIRVLYRAAASIAESYIVAPDHGRSATGMSTTYNVPLRAFKFDYGYAISGFPADSVYMARYALYNDKKIDLIVSGINHGDNISLRSLYSSGTIGATMAGALIGIKGIAFSMSYNGISNEKIDLAEPYIKAIIENAMERFPDDVDILNVNFPGNLNRNTRILPARMSYNIFDDNIIKRLDPNGHEYYWFGNKRHERCPENCDYDVVYRKNSISITPITVKGYLDDLRSTEEFISFINVKELLG.

A divalent metal cation-binding residues include aspartate 7, aspartate 8, serine 38, and asparagine 90.

This sequence belongs to the SurE nucleotidase family. A divalent metal cation serves as cofactor.

The protein resides in the cytoplasm. It carries out the reaction a ribonucleoside 5'-phosphate + H2O = a ribonucleoside + phosphate. Functionally, nucleotidase that shows phosphatase activity on nucleoside 5'-monophosphates. This is 5'-nucleotidase SurE from Picrophilus torridus (strain ATCC 700027 / DSM 9790 / JCM 10055 / NBRC 100828 / KAW 2/3).